Here is a 302-residue protein sequence, read N- to C-terminus: Ribostamycin:4-(gamma-L-glutamylamino)-(S)-2-hydroxybutanoyl-[BtrI acyl-carrier protein] 4-(gamma-L-glutamylamino)-(S)-2-hydroxybutanoate transferase (302 aa).

The enzyme catalyses 4-(gamma-L-glutamylamino)-(2S)-2-hydroxybutanoyl-[BtrI ACP] + ribostamycin = gamma-L-glutamyl-butirosin B + holo-[BtrI ACP] + H(+). It functions in the pathway antibiotic biosynthesis; butirosin biosynthesis. Aminoglycoside acyltransferase that attaches the (S)-4-amino-2-hydroxybutyrate (AHBA) side chain from the acyl carrier protein BtrI to the aminoglycoside ribostamycin in the biosynthetic pathway of butirosin. The AHBA side chain protects the antibiotic from several common resistance mechanisms. This Niallia circulans (Bacillus circulans) protein is Ribostamycin:4-(gamma-L-glutamylamino)-(S)-2-hydroxybutanoyl-[BtrI acyl-carrier protein] 4-(gamma-L-glutamylamino)-(S)-2-hydroxybutanoate transferase (btrH).